The chain runs to 428 residues: Light-independent protochlorophyllide reductase subunit N (428 aa).

[4Fe-4S] cluster contacts are provided by Cys29, Cys54, and Cys115.

The protein belongs to the BchN/ChlN family. In terms of assembly, protochlorophyllide reductase is composed of three subunits; BchL, BchN and BchB. Forms a heterotetramer of two BchB and two BchN subunits. Requires [4Fe-4S] cluster as cofactor.

It catalyses the reaction chlorophyllide a + oxidized 2[4Fe-4S]-[ferredoxin] + 2 ADP + 2 phosphate = protochlorophyllide a + reduced 2[4Fe-4S]-[ferredoxin] + 2 ATP + 2 H2O. It functions in the pathway porphyrin-containing compound metabolism; bacteriochlorophyll biosynthesis (light-independent). Functionally, component of the dark-operative protochlorophyllide reductase (DPOR) that uses Mg-ATP and reduced ferredoxin to reduce ring D of protochlorophyllide (Pchlide) to form chlorophyllide a (Chlide). This reaction is light-independent. The NB-protein (BchN-BchB) is the catalytic component of the complex. The polypeptide is Light-independent protochlorophyllide reductase subunit N (Cereibacter sphaeroides (strain ATCC 17023 / DSM 158 / JCM 6121 / CCUG 31486 / LMG 2827 / NBRC 12203 / NCIMB 8253 / ATH 2.4.1.) (Rhodobacter sphaeroides)).